The sequence spans 334 residues: Serine/Arginine-related protein 53 (334 aa).

Over residues 1–13 the composition is skewed to basic and acidic residues; it reads MGRRSSDTEEESR. Disordered regions lie at residues 1–179, 198–220, and 246–290; these read MGRR…HLPP, DEALKAKERSEEEAKRRKEEDQA, and RSSK…SIPT. Residues 14 to 24 are compositionally biased toward basic residues; it reads SKRKKKHRRRS. The span at 44–62 shows a compositional bias: basic and acidic residues; it reads PRSDSRSWSRDRQLRSHSY. Positions 78 to 118 are enriched in basic residues; it reads SRRKRSRSRSRGRGKPYRVQRSRSKSRTRRSRSRPRPRSHS. Basic and acidic residues-rich tracts occupy residues 132 to 166, 198 to 218, and 247 to 256; these read RSRDRDRRKVRDKEKREKEKDKGKDKEVHSIKRGD, DEALKAKERSEEEAKRRKEED, and SSKDVKKAVE. A coiled-coil region spans residues 180–236; the sequence is AEQAKARLQLVLEAAAKADEALKAKERSEEEAKRRKEEDQATLVEQVKRVKEIEAIE. Residues 265 to 278 are compositionally biased toward low complexity; the sequence is AASGPASAAAEPPS.

Interacts (via Arg/Ser-rich domain) with LUC7L3, RBM39 and RSF1. Phosphorylated.

It localises to the nucleus. The protein resides in the nucleus speckle. It is found in the cytoplasm. Functionally, plays a role in pre-mRNA splicing. Involved in both constitutive and alternative pre-mRNA splicing. May have a role in the recognition of the 3' splice site during the second step of splicing. The sequence is that of Serine/Arginine-related protein 53 (Rsrc1) from Mus musculus (Mouse).